The following is a 1940-amino-acid chain: Myosin-2 (1940 aa).

The region spanning 33 to 82 is the Myosin N-terminal SH3-like domain; the sequence is DAKTSVFVAEPKESFVKGTVQSREGGKVTVKTEAGATLTVKEDQVFPMNP. Residues threonine 64 and threonine 69 each carry the phosphothreonine modification. Residues 86-783 enclose the Myosin motor domain; that stretch reads DKIEDMAMMT…LLGLLEEMRD (698 aa). Lysine 130 is modified (N6,N6,N6-trimethyllysine). 179–186 contributes to the ATP binding site; that stretch reads GESGAGKT. Residue tyrosine 389 is modified to Phosphotyrosine. Residue serine 392 is modified to Phosphoserine. Phosphothreonine is present on threonine 419. Phosphoserine is present on serine 625. The tract at residues 660 to 682 is actin-binding; that stretch reads LNKLMTNLRSTHPHFVRCIIPNE. Histidine 758 is modified (pros-methylhistidine). The segment at 762-776 is actin-binding; that stretch reads KFGHTKVFFKAGLLG. In terms of domain architecture, IQ spans 786–815; the sequence is LAQLITRTQARCRGFLARVEYQKMVERRES. A coiled-coil region spans residues 844–1940; it reads LLKSAETEKE…EVHTKVISEE (1097 aa). A phosphoserine mark is found at serine 1093, serine 1097, serine 1163, and serine 1238. A disordered region spans residues 1154–1173; sequence RLEEAGGATSAQIEMNKKRE. Threonine 1242 carries the phosphothreonine modification. Serine 1244 bears the Phosphoserine mark. Threonine 1256 bears the Phosphothreonine mark. At serine 1262 the chain carries Phosphoserine. Position 1287 is a phosphothreonine (threonine 1287). A phosphoserine mark is found at serine 1289, serine 1293, serine 1304, and serine 1307. Tyrosine 1465 carries the phosphotyrosine modification. Position 1468 is a phosphothreonine (threonine 1468). Serine 1475 carries the post-translational modification Phosphoserine. Tyrosine 1493 carries the post-translational modification Phosphotyrosine. Serine 1496 is modified (phosphoserine). At threonine 1502 the chain carries Phosphothreonine. Serine 1515 carries the post-translational modification Phosphoserine. Phosphothreonine is present on threonine 1518. Serine 1543, serine 1555, serine 1575, serine 1601, serine 1715, and serine 1727 each carry phosphoserine. Residues threonine 1731 and threonine 1737 each carry the phosphothreonine modification. Serine 1740 bears the Phosphoserine mark. A disordered region spans residues 1884–1920; that stretch reads KRQAEEAEEQSNTNLSKFRKLQHELEEAEERADIAES.

It belongs to the TRAFAC class myosin-kinesin ATPase superfamily. Myosin family. As to quaternary structure, muscle myosin is a hexameric protein that consists of 2 heavy chain subunits (MHC), 2 alkali light chain subunits (MLC) and 2 regulatory light chain subunits (MLC-2). Interacts with GCSAM.

The protein localises to the cytoplasm. It localises to the myofibril. Functionally, myosins are actin-based motor molecules with ATPase activity essential for muscle contraction. The chain is Myosin-2 (MYH2) from Canis lupus familiaris (Dog).